The chain runs to 216 residues: 3-isopropylmalate dehydratase small subunit (216 aa).

Belongs to the LeuD family. LeuD type 1 subfamily. As to quaternary structure, heterodimer of LeuC and LeuD.

The enzyme catalyses (2R,3S)-3-isopropylmalate = (2S)-2-isopropylmalate. The protein operates within amino-acid biosynthesis; L-leucine biosynthesis; L-leucine from 3-methyl-2-oxobutanoate: step 2/4. Catalyzes the isomerization between 2-isopropylmalate and 3-isopropylmalate, via the formation of 2-isopropylmaleate. The polypeptide is 3-isopropylmalate dehydratase small subunit (Polaromonas naphthalenivorans (strain CJ2)).